We begin with the raw amino-acid sequence, 144 residues long: MKAVLTRVSSASVSVDDEIVGAIDCPDTGGILALVGVGAADSDDAWETMVRKIAELRILDGEQSVSDVNAPVLLVSQFTLHGRTAKGRRPSWSDAAPGEVAEPVIEKIAQGLRERGITVEQGRFGAMMKVTSVNEGPFTVLVEC.

The short motif at 136-137 (GP) is the Gly-cisPro motif, important for rejection of L-amino acids element.

Belongs to the DTD family. Homodimer.

The protein localises to the cytoplasm. The enzyme catalyses glycyl-tRNA(Ala) + H2O = tRNA(Ala) + glycine + H(+). It carries out the reaction a D-aminoacyl-tRNA + H2O = a tRNA + a D-alpha-amino acid + H(+). An aminoacyl-tRNA editing enzyme that deacylates mischarged D-aminoacyl-tRNAs. Also deacylates mischarged glycyl-tRNA(Ala), protecting cells against glycine mischarging by AlaRS. Acts via tRNA-based rather than protein-based catalysis; rejects L-amino acids rather than detecting D-amino acids in the active site. By recycling D-aminoacyl-tRNA to D-amino acids and free tRNA molecules, this enzyme counteracts the toxicity associated with the formation of D-aminoacyl-tRNA entities in vivo and helps enforce protein L-homochirality. In Corynebacterium glutamicum (strain R), this protein is D-aminoacyl-tRNA deacylase.